The following is a 394-amino-acid chain: NAD(P)H-quinone oxidoreductase subunit H (394 aa).

It belongs to the complex I 49 kDa subunit family. In terms of assembly, NDH-1 can be composed of about 15 different subunits; different subcomplexes with different compositions have been identified which probably have different functions.

The protein localises to the cellular thylakoid membrane. The enzyme catalyses a plastoquinone + NADH + (n+1) H(+)(in) = a plastoquinol + NAD(+) + n H(+)(out). It catalyses the reaction a plastoquinone + NADPH + (n+1) H(+)(in) = a plastoquinol + NADP(+) + n H(+)(out). Functionally, NDH-1 shuttles electrons from an unknown electron donor, via FMN and iron-sulfur (Fe-S) centers, to quinones in the respiratory and/or the photosynthetic chain. The immediate electron acceptor for the enzyme in this species is believed to be plastoquinone. Couples the redox reaction to proton translocation, and thus conserves the redox energy in a proton gradient. Cyanobacterial NDH-1 also plays a role in inorganic carbon-concentration. This is NAD(P)H-quinone oxidoreductase subunit H from Synechococcus sp. (strain JA-3-3Ab) (Cyanobacteria bacterium Yellowstone A-Prime).